Reading from the N-terminus, the 508-residue chain is Histidine ammonia-lyase (508 aa).

The 5-imidazolinone (Ala-Gly) cross-link spans 141-143 (ASG). Ser-142 carries the 2,3-didehydroalanine (Ser) modification.

It belongs to the PAL/histidase family. In terms of processing, contains an active site 4-methylidene-imidazol-5-one (MIO), which is formed autocatalytically by cyclization and dehydration of residues Ala-Ser-Gly.

The protein localises to the cytoplasm. It catalyses the reaction L-histidine = trans-urocanate + NH4(+). Its pathway is amino-acid degradation; L-histidine degradation into L-glutamate; N-formimidoyl-L-glutamate from L-histidine: step 1/3. In Geobacillus sp. (strain WCH70), this protein is Histidine ammonia-lyase.